The following is a 179-amino-acid chain: Acireductone dioxygenase (179 aa).

His99, His101, Glu105, and His144 together coordinate Fe(2+). The Ni(2+) site is built by His99, His101, Glu105, and His144.

The protein belongs to the acireductone dioxygenase (ARD) family. As to quaternary structure, monomer. It depends on Fe(2+) as a cofactor. Ni(2+) is required as a cofactor.

The enzyme catalyses 1,2-dihydroxy-5-(methylsulfanyl)pent-1-en-3-one + O2 = 3-(methylsulfanyl)propanoate + CO + formate + 2 H(+). The catalysed reaction is 1,2-dihydroxy-5-(methylsulfanyl)pent-1-en-3-one + O2 = 4-methylsulfanyl-2-oxobutanoate + formate + 2 H(+). It participates in amino-acid biosynthesis; L-methionine biosynthesis via salvage pathway; L-methionine from S-methyl-5-thio-alpha-D-ribose 1-phosphate: step 5/6. In terms of biological role, catalyzes 2 different reactions between oxygen and the acireductone 1,2-dihydroxy-3-keto-5-methylthiopentene (DHK-MTPene) depending upon the metal bound in the active site. Fe-containing acireductone dioxygenase (Fe-ARD) produces formate and 2-keto-4-methylthiobutyrate (KMTB), the alpha-ketoacid precursor of methionine in the methionine recycle pathway. Ni-containing acireductone dioxygenase (Ni-ARD) produces methylthiopropionate, carbon monoxide and formate, and does not lie on the methionine recycle pathway. The polypeptide is Acireductone dioxygenase (Exiguobacterium sibiricum (strain DSM 17290 / CCUG 55495 / CIP 109462 / JCM 13490 / 255-15)).